The sequence spans 38 residues: Potassium channel toxin alpha-KTx 3.12 (38 aa).

3 cysteine pairs are disulfide-bonded: Cys8-Cys28, Cys14-Cys33, and Cys18-Cys35. Lys38 bears the Lysine amide mark.

It belongs to the short scorpion toxin superfamily. Potassium channel inhibitor family. Alpha-KTx 03 subfamily. As to expression, expressed by the venom gland.

The protein localises to the secreted. Its function is as follows. Potent inhibitor of voltage-dependent potassium channels, with a preference for Kv1.3/KCNA3 versus Kv1.2/KCNA2. The polypeptide is Potassium channel toxin alpha-KTx 3.12 (Androctonus amoreuxi (African fattail scorpion)).